Here is a 485-residue protein sequence, read N- to C-terminus: MKHAIRHIHFVGIGGSGMSGIAEVLFNLGYRITGSDLADSATLRRLAGLGIGTFVGHAAAHIDGADAVVTSTAVQSDNPEVLAAREKRIPVVPRALMLAELMRLKQGIAIAGTHGKTTTTSLVASVLDAAGLDPTFVIGGRLNSAGANAQLGSGDYIVVEADESDASFLNLLPVMAVVTNIDADHMETYGHDFAKLKKAFVDFLHRMPFYGVAILCTDDPAVRDIVAEVTCPVTSYGFGEEAQVRAIDVRAVGGQMHFTAQRRNGVTLPDLPIVLNLPGEHNVRNALSVIAVAVELGIPDEAVQRGLAGFKGVGRRFQSYGEVAAQGEPAGSFTVIDDYGHHPVEMAATIAAARGAFPGRRLVLAFQPHRYTRTRDCFEDFVKVIGNADAVLLGEVYAAGEPPIVAADGRTLARALRVAGKVEPVFVDDIGAMPQAILDNARAGDVVLCMGAGSIGAVPGKVVEIAAAASLPQQTTRTRRKGEAS.

An ATP-binding site is contributed by 112-118 (GTHGKTT).

The protein belongs to the MurCDEF family.

It localises to the cytoplasm. The enzyme catalyses UDP-N-acetyl-alpha-D-muramate + L-alanine + ATP = UDP-N-acetyl-alpha-D-muramoyl-L-alanine + ADP + phosphate + H(+). Its pathway is cell wall biogenesis; peptidoglycan biosynthesis. Its function is as follows. Cell wall formation. In Variovorax paradoxus (strain S110), this protein is UDP-N-acetylmuramate--L-alanine ligase.